Consider the following 476-residue polypeptide: 3-isopropylmalate dehydratase large subunit (476 aa).

Residues Cys-357, Cys-417, and Cys-420 each contribute to the [4Fe-4S] cluster site.

Belongs to the aconitase/IPM isomerase family. LeuC type 1 subfamily. In terms of assembly, heterodimer of LeuC and LeuD. [4Fe-4S] cluster serves as cofactor.

It carries out the reaction (2R,3S)-3-isopropylmalate = (2S)-2-isopropylmalate. The protein operates within amino-acid biosynthesis; L-leucine biosynthesis; L-leucine from 3-methyl-2-oxobutanoate: step 2/4. Its function is as follows. Catalyzes the isomerization between 2-isopropylmalate and 3-isopropylmalate, via the formation of 2-isopropylmaleate. The sequence is that of 3-isopropylmalate dehydratase large subunit from Mycolicibacterium paratuberculosis (strain ATCC BAA-968 / K-10) (Mycobacterium paratuberculosis).